Reading from the N-terminus, the 165-residue chain is Nucleotide-binding protein PMM0481 (165 aa).

This sequence belongs to the YajQ family.

In terms of biological role, nucleotide-binding protein. In Prochlorococcus marinus subsp. pastoris (strain CCMP1986 / NIES-2087 / MED4), this protein is Nucleotide-binding protein PMM0481.